Here is an 89-residue protein sequence, read N- to C-terminus: Islet amyloid polypeptide (89 aa).

Residues 1–22 form the signal peptide; the sequence is MCLLKLPVVLIVLLVALHHLKA. A propeptide spanning residues 23-31 is cleaved from the precursor; it reads TPIESNQVE. An intrachain disulfide couples cysteine 35 to cysteine 40. A Tyrosine amide modification is found at tyrosine 70. Residues 74-89 constitute a propeptide that is removed on maturation; that stretch reads STVDILNREPLNYLPF.

This sequence belongs to the calcitonin family. In terms of assembly, can form homodimers. Interacts with IDE and INS. Interaction with INS inhibits homodimerization and fibril formation.

It is found in the secreted. Its function is as follows. Amylin/IAPP is a glucoregulatory peptide hormone that plays an important role in the regulation of energy homeostasis. Selectively inhibits insulin-stimulated glucose utilization and glycogen deposition in muscle, while not affecting adipocyte glucose metabolism. IAPP function is mediated by the CALCR-RAMPs (AMYRs) receptor complexes. Amylin can also bind CALCR receptor in the absence of RAMPs, although it is more selective for AMYRs. The chain is Islet amyloid polypeptide (IAPP) from Felis catus (Cat).